The following is a 232-amino-acid chain: Ashwin (232 aa).

5 positions are modified to phosphoserine: S112, S182, S184, S189, and S193. The disordered stretch occupies residues 163 to 232 (KMEHNNNDTQ…KRKIQHVTWP (70 aa)). 2 positions are modified to phosphothreonine: T197 and T198. A compositionally biased stretch (basic and acidic residues) spans 206-224 (APKEEAEATNHLKPPEVKR).

This sequence belongs to the ashwin family. As to quaternary structure, component of the tRNA-splicing ligase complex.

Its subcellular location is the nucleus. This is Ashwin from Mus musculus (Mouse).